Reading from the N-terminus, the 64-residue chain is MPKMKSHRGACKRFKVTASGKIKRERMNGSHNLEKKNRKRSRRLHQSTLLEGTKAKQIKQMIQG.

This sequence belongs to the bacterial ribosomal protein bL35 family.

This Chlorobium chlorochromatii (strain CaD3) protein is Large ribosomal subunit protein bL35.